Consider the following 168-residue polypeptide: Zinc-finger homeodomain protein 14 (168 aa).

The ZF-HD dimerization-type; degenerate zinc-finger motif lies at 7–51 (YRECMRNHAAKLGSYAIDGCREYSQPSTGDLCVACGCHRSYHRRI). A coiled-coil region spans residues 76–103 (ARLKWKTAEERNEEEEDDTEETSTEEKM). Positions 82–112 (TAEERNEEEEDDTEETSTEEKMTVQRRRKSK) are disordered. The segment covering 86 to 98 (RNEEEEDDTEETS) has biased composition (acidic residues). A DNA-binding region (homeobox) is located at residues 106-168 (QRRRKSKFTA…WVNNNKKFYH (63 aa)).

In terms of assembly, homo- and heterodimer with other ZFHD proteins. Interacts with ZHD11. As to expression, mostly expressed in flowers and stems.

Its subcellular location is the nucleus. Its function is as follows. Putative transcription factor. This is Zinc-finger homeodomain protein 14 (ZHD14) from Arabidopsis thaliana (Mouse-ear cress).